Here is a 2368-residue protein sequence, read N- to C-terminus: Serine/threonine-protein kinase MEC1 (2368 aa).

Positions 1399–1944 constitute an FAT domain; sequence LLAQRSLETD…LWYITALVNS (546 aa). A PI3K/PI4K catalytic domain is found at 2049–2352; the sequence is FGSSYKVFSS…QTETLIQEAT (304 aa). Positions 2055–2061 are G-loop; it reads VFSSLKK. A binding to the RPA complex region spans residues 2140-2368; it reads SILSTKYESL…KMYIGWLPFW (229 aa). Positions 2221–2229 are catalytic loop; that stretch reads GLGDRHCEN. Residues 2241–2265 form an activation loop region; the sequence is HVDFDCLFEKGKRLPVPEIVPFRLT. The FATC domain maps to 2336 to 2368; the sequence is LVLSVAGQTETLIQEATSEDNLSKMYIGWLPFW.

It belongs to the PI3/PI4-kinase family. ATM subfamily. Interacts with LCD1, which is required for localization MEC1 to the RPA complex. Interacts directly with the RPA subunits RFA1 and RFA2.

The protein localises to the nucleus. It carries out the reaction L-seryl-[protein] + ATP = O-phospho-L-seryl-[protein] + ADP + H(+). The catalysed reaction is L-threonyl-[protein] + ATP = O-phospho-L-threonyl-[protein] + ADP + H(+). Its function is as follows. Serine/threonine protein kinase which activates checkpoint signaling upon genotoxic stresses such as ionizing radiation (IR), ultraviolet light (UV), or DNA replication stalling, thereby acting as a DNA damage sensor. Recognizes the substrate consensus sequence [ST]-Q. Recruited in complex with protein LCD1 by the single-strand-binding protein complex RPA to DNA lesions in order to initiate the DNA repair by homologous recombination, after the MRX-complex and TEL1 are displaced. Phosphorylates LCD1 and RPA2, a subunit of RPA, involved in DNA replication, repair and recombination. Phosphorylates RAD9, CHK1 and RAD53, which leads to the activation of the CHK1 and RAD53 kinases involved in DNA damage repair cascade. Phosphorylates histone H2A to form H2AS128ph (gamma-H2A) at sites of DNA damage, also involved in the regulation of DNA damage response mechanism. Also phosphorylates SLX4 and RTT107 which are proteins involved in genome stability. Required for cell growth and meiotic recombination. The sequence is that of Serine/threonine-protein kinase MEC1 (MEC1) from Saccharomyces cerevisiae (strain ATCC 204508 / S288c) (Baker's yeast).